Here is a 522-residue protein sequence, read N- to C-terminus: MSEIWEDAIKSNAWPFVEAKKILDSLNGKIPEKGYVLFETGYGPSGLPHIGTFGENARMVMVQKAFEQLSDIPTKLICFSDDMDGLRKVPSNIPNPEMVAQYMDMPLTSIPDTFGECESYGHYMNAKLRSFLDKFGFEYEFYSSTNCYKAGMFDEMLIMVLEKYDEIMELMLPTFREERKATYSPCMPICPKTGKVLQVPIEKWDAKAGTVTYKDEAGNYIEVPVTGGHCKLQWKPDFGMRWAALKVDYEMYGKDHLANARLYSEICRILGGKPPVQLCYELFLDENGEKISKSKGNSISVDDWLKCAPVESMALFMYQNPTRAKRLFFDVIPKNVDKYITFNQKYHLEEDRAKRFANPVYHIHHGNVPQIETFGITYSLLLNLTSVCNPSDKSVLWGFISKYEPKATPNTSPYLDHLAEFAIRYYNDFIKAHKSYLSPSEKHKVILQDILDMLSDIADQTEAEAIQKAIYDIGMKAGYENLRDYFKDLYQILLGQNEGPRLGTFIKLYGVQEMKKLVEGQL.

A 'HIGH' region motif is present at residues 44-52 (PSGLPHIGT). Positions 290–294 (KISKS) match the 'KMSKS' region motif. Lysine 293 contributes to the ATP binding site.

The protein belongs to the class-I aminoacyl-tRNA synthetase family.

Its subcellular location is the cytoplasm. The catalysed reaction is tRNA(Lys) + L-lysine + ATP = L-lysyl-tRNA(Lys) + AMP + diphosphate. The protein is Lysine--tRNA ligase of Rickettsia massiliae (strain Mtu5).